A 294-amino-acid chain; its full sequence is Indole-3-glycerol phosphate synthase (294 aa).

The protein belongs to the TrpC family.

It catalyses the reaction 1-(2-carboxyphenylamino)-1-deoxy-D-ribulose 5-phosphate + H(+) = (1S,2R)-1-C-(indol-3-yl)glycerol 3-phosphate + CO2 + H2O. The protein operates within amino-acid biosynthesis; L-tryptophan biosynthesis; L-tryptophan from chorismate: step 4/5. In Synechococcus sp. (strain RCC307), this protein is Indole-3-glycerol phosphate synthase.